A 78-amino-acid polypeptide reads, in one-letter code: Exodeoxyribonuclease 7 small subunit (78 aa).

Belongs to the XseB family. Heterooligomer composed of large and small subunits.

The protein localises to the cytoplasm. It catalyses the reaction Exonucleolytic cleavage in either 5'- to 3'- or 3'- to 5'-direction to yield nucleoside 5'-phosphates.. Functionally, bidirectionally degrades single-stranded DNA into large acid-insoluble oligonucleotides, which are then degraded further into small acid-soluble oligonucleotides. The chain is Exodeoxyribonuclease 7 small subunit from Oceanobacillus iheyensis (strain DSM 14371 / CIP 107618 / JCM 11309 / KCTC 3954 / HTE831).